The chain runs to 264 residues: MKQYLDLMTRVLAEGTPKADRTGTGTLSIFGHQMRFNLQDGFPLVTTKRCHIRSIIHELLWFLNGDTNIKYLHENGVTIWDEWADENGDLGPVYGKQWRAWGTADGRQIDQLKTVLEQLKSDPDSRRIIVSAWNVGELDKMALAPCHAFFQFYVADGKLSCQLYQRSCDVFLGLPFNIASYALLVHMMAQQCDLEVGDFVWTGGDTHLYSNHMEQTKLQLSREPRSLPKLVIKRKPASLFDYKFDDFEIVDYDPHPGIKAPVAI.

Arg-21 serves as a coordination point for dUMP. His-51 contributes to the (6R)-5,10-methylene-5,6,7,8-tetrahydrofolate binding site. Position 126 to 127 (126 to 127) interacts with dUMP; sequence RR. Cys-146 (nucleophile) is an active-site residue. DUMP is bound by residues 166–169, Asn-177, and 207–209; these read RSCD and HLY. Asp-169 provides a ligand contact to (6R)-5,10-methylene-5,6,7,8-tetrahydrofolate. Ala-263 serves as a coordination point for (6R)-5,10-methylene-5,6,7,8-tetrahydrofolate.

The protein belongs to the thymidylate synthase family. Bacterial-type ThyA subfamily. In terms of assembly, homodimer.

The protein resides in the cytoplasm. The catalysed reaction is dUMP + (6R)-5,10-methylene-5,6,7,8-tetrahydrofolate = 7,8-dihydrofolate + dTMP. The protein operates within pyrimidine metabolism; dTTP biosynthesis. Its function is as follows. Catalyzes the reductive methylation of 2'-deoxyuridine-5'-monophosphate (dUMP) to 2'-deoxythymidine-5'-monophosphate (dTMP) while utilizing 5,10-methylenetetrahydrofolate (mTHF) as the methyl donor and reductant in the reaction, yielding dihydrofolate (DHF) as a by-product. This enzymatic reaction provides an intracellular de novo source of dTMP, an essential precursor for DNA biosynthesis. This Photorhabdus laumondii subsp. laumondii (strain DSM 15139 / CIP 105565 / TT01) (Photorhabdus luminescens subsp. laumondii) protein is Thymidylate synthase.